Here is a 65-residue protein sequence, read N- to C-terminus: Large ribosomal subunit protein bL35 (65 aa).

Belongs to the bacterial ribosomal protein bL35 family.

The polypeptide is Large ribosomal subunit protein bL35 (Prochlorococcus marinus (strain NATL1A)).